A 168-amino-acid chain; its full sequence is Ribosome-binding factor A (168 aa).

A compositionally biased stretch (basic and acidic residues) spans 122–136; the sequence is VRRDARPAGDDDPYR. The segment at 122–168 is disordered; it reads VRRDARPAGDDDPYRRPRPAAGEVDELSEVDELSEVDEYGGTARQEG. Residues 144–159 show a composition bias toward acidic residues; that stretch reads EVDELSEVDELSEVDE.

It belongs to the RbfA family. In terms of assembly, monomer. Binds 30S ribosomal subunits, but not 50S ribosomal subunits or 70S ribosomes.

The protein resides in the cytoplasm. Its function is as follows. One of several proteins that assist in the late maturation steps of the functional core of the 30S ribosomal subunit. Associates with free 30S ribosomal subunits (but not with 30S subunits that are part of 70S ribosomes or polysomes). Required for efficient processing of 16S rRNA. May interact with the 5'-terminal helix region of 16S rRNA. In Frankia casuarinae (strain DSM 45818 / CECT 9043 / HFP020203 / CcI3), this protein is Ribosome-binding factor A.